Here is a 212-residue protein sequence, read N- to C-terminus: Prolactin (212 aa).

Positions 1 to 26 (MARCCKCPRLHLAVTVLACVLVFTEG) are cleaved as a signal peptide. Intrachain disulfides connect Cys-71/Cys-185 and Cys-202/Cys-212.

The protein belongs to the somatotropin/prolactin family. In terms of tissue distribution, pituitary gland.

The protein resides in the secreted. In Ictalurus punctatus (Channel catfish), this protein is Prolactin (prl).